Reading from the N-terminus, the 310-residue chain is tRNA-cytidine(32) 2-sulfurtransferase (310 aa).

The PP-loop motif motif lies at 47–52 (SGGKDS). 3 residues coordinate [4Fe-4S] cluster: cysteine 122, cysteine 125, and cysteine 213.

Belongs to the TtcA family. In terms of assembly, homodimer. Mg(2+) is required as a cofactor. Requires [4Fe-4S] cluster as cofactor.

Its subcellular location is the cytoplasm. The enzyme catalyses cytidine(32) in tRNA + S-sulfanyl-L-cysteinyl-[cysteine desulfurase] + AH2 + ATP = 2-thiocytidine(32) in tRNA + L-cysteinyl-[cysteine desulfurase] + A + AMP + diphosphate + H(+). Its pathway is tRNA modification. Catalyzes the ATP-dependent 2-thiolation of cytidine in position 32 of tRNA, to form 2-thiocytidine (s(2)C32). The sulfur atoms are provided by the cysteine/cysteine desulfurase (IscS) system. This Haemophilus influenzae (strain 86-028NP) protein is tRNA-cytidine(32) 2-sulfurtransferase.